Here is a 382-residue protein sequence, read N- to C-terminus: tRNA (guanine(26)-N(2))-dimethyltransferase (382 aa).

One can recognise a Trm1 methyltransferase domain in the interval 4-370; the sequence is TEVIEGKARL…REFSEILECV (367 aa). S-adenosyl-L-methionine contacts are provided by arginine 44, arginine 69, aspartate 87, aspartate 113, and alanine 114. 4 residues coordinate Zn(2+): cysteine 244, cysteine 247, cysteine 261, and cysteine 264.

This sequence belongs to the class I-like SAM-binding methyltransferase superfamily. Trm1 family.

It carries out the reaction guanosine(26) in tRNA + 2 S-adenosyl-L-methionine = N(2)-dimethylguanosine(26) in tRNA + 2 S-adenosyl-L-homocysteine + 2 H(+). Dimethylates a single guanine residue at position 26 of a number of tRNAs using S-adenosyl-L-methionine as donor of the methyl groups. The sequence is that of tRNA (guanine(26)-N(2))-dimethyltransferase from Metallosphaera sedula (strain ATCC 51363 / DSM 5348 / JCM 9185 / NBRC 15509 / TH2).